The sequence spans 416 residues: Gamma-glutamyl phosphate reductase (416 aa).

This sequence belongs to the gamma-glutamyl phosphate reductase family.

It is found in the cytoplasm. It carries out the reaction L-glutamate 5-semialdehyde + phosphate + NADP(+) = L-glutamyl 5-phosphate + NADPH + H(+). Its pathway is amino-acid biosynthesis; L-proline biosynthesis; L-glutamate 5-semialdehyde from L-glutamate: step 2/2. Catalyzes the NADPH-dependent reduction of L-glutamate 5-phosphate into L-glutamate 5-semialdehyde and phosphate. The product spontaneously undergoes cyclization to form 1-pyrroline-5-carboxylate. The polypeptide is Gamma-glutamyl phosphate reductase (Leptospira interrogans serogroup Icterohaemorrhagiae serovar copenhageni (strain Fiocruz L1-130)).